A 653-amino-acid chain; its full sequence is Leishmanolysin homolog (653 aa).

The signal sequence occupies residues 1–44; sequence MHAPPTATRRSGPRRTHGIMARLVRLAAGVLVVTLVIGALTALS. Residues 45-113 constitute a propeptide, activation peptide; sequence ADDAKTHPHK…ALAGDSAPDV (69 aa). 2 disulfides stabilise this stretch: Cys-138-Cys-155 and Cys-203-Cys-242. His-276 contacts Zn(2+). Glu-277 is an active-site residue. His-280 and His-346 together coordinate Zn(2+). Intrachain disulfides connect Cys-326–Cys-398, Cys-405–Cys-468, Cys-418–Cys-437, Cys-427–Cys-502, Cys-479–Cys-524, Cys-529–Cys-579, and Cys-549–Cys-572. N-linked (GlcNAc...) asparagine glycosylation is found at Asn-383 and Asn-409. N-linked (GlcNAc...) asparagine glycosylation is present at Asn-569. Residues 590–631 are disordered; it reads ESMTNSGSGSSRPAPVEPSGSGSGSSAATTAPSPTRDGSAAA. The segment covering 591–600 has biased composition (polar residues); sequence SMTNSGSGSS. The segment covering 607-631 has biased composition (low complexity); the sequence is PSGSGSGSSAATTAPSPTRDGSAAA. Residue Ser-628 is the site of GPI-anchor amidated serine attachment. A propeptide spans 629–653 (removed in mature form); sequence AAADRIAPRTAAVALLALAVAAACV.

Belongs to the peptidase M8 family. Requires Zn(2+) as cofactor.

It is found in the cell membrane. The catalysed reaction is Preference for hydrophobic residues at P1 and P1' and basic residues at P2' and P3'. A model nonapeptide is cleaved at -Ala-Tyr-|-Leu-Lys-Lys-.. Its function is as follows. Plays an integral role during the infection of macrophages in the mammalian host. This chain is Leishmanolysin homolog (gp63), found in Crithidia fasciculata.